Consider the following 266-residue polypeptide: Putative carbamate hydrolase RutD (266 aa).

One can recognise an AB hydrolase-1 domain in the interval 14–238; sequence PVVVLSAGLG…RVEMPWGGHA (225 aa).

It belongs to the AB hydrolase superfamily. Hydrolase RutD family.

It carries out the reaction carbamate + 2 H(+) = NH4(+) + CO2. In terms of biological role, involved in pyrimidine catabolism. May facilitate the hydrolysis of carbamate, a reaction that can also occur spontaneously. In Klebsiella pneumoniae (strain 342), this protein is Putative carbamate hydrolase RutD.